A 409-amino-acid polypeptide reads, in one-letter code: Argininosuccinate synthase (409 aa).

9 to 17 (AYSGGLDTS) contacts ATP. Position 86 (Y86) interacts with L-citrulline. G116 contacts ATP. L-aspartate-binding residues include T118, N122, and D123. N122 is an L-citrulline binding site. R126, S174, S183, E259, and Y271 together coordinate L-citrulline.

It belongs to the argininosuccinate synthase family. Type 1 subfamily. In terms of assembly, homotetramer.

The protein resides in the cytoplasm. The enzyme catalyses L-citrulline + L-aspartate + ATP = 2-(N(omega)-L-arginino)succinate + AMP + diphosphate + H(+). It functions in the pathway amino-acid biosynthesis; L-arginine biosynthesis; L-arginine from L-ornithine and carbamoyl phosphate: step 2/3. The polypeptide is Argininosuccinate synthase (Halalkalibacterium halodurans (strain ATCC BAA-125 / DSM 18197 / FERM 7344 / JCM 9153 / C-125) (Bacillus halodurans)).